The primary structure comprises 433 residues: uncharacterized protein (433 aa).

The next 11 membrane-spanning stretches (helical) occupy residues 28–48, 56–76, 102–122, 126–146, 164–184, 207–227, 250–270, 304–324, 345–365, 375–395, and 406–426; these read FAALGPGILMASAAVGGSHII, IYGWQLAIIIILANLFKYPFF, IWIFFLLNVFATVINTAAVGL, AILTFVLPVQVPVPTLSFIVI, LSKLIMIALTITTVSAVIIAL, ALGFIVALMGWMPAPIEISAI, FNVGYIGTAILALVFLALGAL, GLIAFIAFMCMFGTTITVIDG, SYLNVAITFAALAGLAIIFYF, FAMIASFVSTPVFAYLNLSLV, and LLWLSLIGLMYLTSFTLLFIA.

It localises to the cell membrane. This is an uncharacterized protein from Pasteurella multocida (strain Pm70).